A 137-amino-acid polypeptide reads, in one-letter code: Small ribosomal subunit protein uS12 (137 aa).

Polar residues predominate over residues 31-41 (MSRKQTNNTAP). Residues 31 to 57 (MSRKQTNNTAPQKRGVATRVGTMTPKK) are disordered. Residue Asp-102 is modified to 3-methylthioaspartic acid.

This sequence belongs to the universal ribosomal protein uS12 family. Part of the 30S ribosomal subunit. Contacts proteins S8 and S17. May interact with IF1 in the 30S initiation complex.

With S4 and S5 plays an important role in translational accuracy. Functionally, interacts with and stabilizes bases of the 16S rRNA that are involved in tRNA selection in the A site and with the mRNA backbone. Located at the interface of the 30S and 50S subunits, it traverses the body of the 30S subunit contacting proteins on the other side and probably holding the rRNA structure together. The combined cluster of proteins S8, S12 and S17 appears to hold together the shoulder and platform of the 30S subunit. The polypeptide is Small ribosomal subunit protein uS12 (Oenococcus oeni (strain ATCC BAA-331 / PSU-1)).